The following is an 810-amino-acid chain: MSVIAQAGAKGRQLHKFGGSSLADVKCYLRVAGIMAEYSQPDDMMVVSAAGSTTNQLINWLKLSQTDRLSAHQVQQTLRRYQCDLISGLLPAEEADSLISAFVSDLERLAALLDSGINDAVYAEVVGHGEVWSARLMSAVLNQQGLPAAWLDAREFLRAERAAQPQVDEGLSYPLLQQLLVQHPGKRLVVTGFISRNNAGETVLLGRNGSDYSATQIGALAGVSRVTIWSDVAGVYSADPRKVKDACLLPLLRLDEASELARLAAPVLHARTLQPVSGSEIDLQLRCSYTPDQGSTRIERVLASGTGARIVTSHDDVCLIEFQVPASQDFKLAHKEIDQILKRAQVRPLAVGVHNDRQLLQFCYTSEVADSALKILDEAGLPGELRLRQGLALVAMVGAGVTRNPLHCHRFWQQLKGQPVEFTWQSDDGISLVAVLRTGPTESLIQGLHQSVFRAEKRIGLVLFGKGNIGSRWLELFAREQSTLSARTGFEFVLAGVVDSRRSLLSYDGLDASRALAFFNDEAVEQDEESLFLWMRAHPYDDLVVLDVTASQQLADQYLDFASHGFHVISANKLAGASDSNKYRQIHDAFEKTGRHWLYNATVGAGLPINHTVRDLIDSGDTILSISGIFSGTLSWLFLQFDGSVPFTELVDQAWQQGLTEPDPRDDLSGKDVMRKLVILAREAGYNIEPDQVRVESLVPAHCEGGSIDHFFENGDELNEQMVQRLEAAREMGLVLRYVARFDANGKARVGVEAVREDHPLASLLPCDNVFAIESRWYRDNPLVIRGPGAGRDVTAGAIQSDINRLAQLL.

Residues 2-252 (SVIAQAGAKG…VKDACLLPLL (251 aa)) form an aspartokinase region. The tract at residues 253–463 (RLDEASELAR…RAEKRIGLVL (211 aa)) is interface. The segment at 464 to 810 (FGKGNIGSRW…SDINRLAQLL (347 aa)) is homoserine dehydrogenase. NADP(+)-binding residues include Asn-468 and Ile-469. Residues Ile-469 and Val-498 each contribute to the NAD(+) site. Ile-469 serves as a coordination point for NADPH. NADP(+)-binding residues include Arg-501, Thr-549, and Lys-573. Thr-549 provides a ligand contact to NAD(+). Residues Thr-549 and Lys-573 each coordinate NADPH. Na(+) contacts are provided by Val-603, Ala-605, and Leu-607. The NADP(+) site is built by Gly-658 and Glu-661. Residues Glu-661 and Asp-672 each coordinate L-homoserine. The active-site Proton donor is Lys-676. Residue Gly-791 participates in NADP(+) binding. Gly-791 contacts NAD(+). Residue Gly-791 coordinates NADPH.

This sequence in the N-terminal section; belongs to the aspartokinase family. It in the C-terminal section; belongs to the homoserine dehydrogenase family. In terms of assembly, homotetramer. It depends on a metal cation as a cofactor.

The enzyme catalyses L-homoserine + NADP(+) = L-aspartate 4-semialdehyde + NADPH + H(+). The catalysed reaction is L-homoserine + NAD(+) = L-aspartate 4-semialdehyde + NADH + H(+). It catalyses the reaction L-aspartate + ATP = 4-phospho-L-aspartate + ADP. The protein operates within amino-acid biosynthesis; L-lysine biosynthesis via DAP pathway; (S)-tetrahydrodipicolinate from L-aspartate: step 1/4. It participates in amino-acid biosynthesis; L-methionine biosynthesis via de novo pathway; L-homoserine from L-aspartate: step 1/3. Its pathway is amino-acid biosynthesis; L-methionine biosynthesis via de novo pathway; L-homoserine from L-aspartate: step 3/3. It functions in the pathway amino-acid biosynthesis; L-threonine biosynthesis; L-threonine from L-aspartate: step 1/5. The protein operates within amino-acid biosynthesis; L-threonine biosynthesis; L-threonine from L-aspartate: step 3/5. In terms of biological role, bifunctional aspartate kinase and homoserine dehydrogenase that catalyzes the first and the third steps toward the synthesis of lysine, methionine and threonine from aspartate. The polypeptide is Bifunctional aspartokinase/homoserine dehydrogenase 2 (metL) (Escherichia coli (strain K12)).